Reading from the N-terminus, the 442-residue chain is Histidine--tRNA ligase (442 aa).

It belongs to the class-II aminoacyl-tRNA synthetase family. As to quaternary structure, homodimer.

It is found in the cytoplasm. The catalysed reaction is tRNA(His) + L-histidine + ATP = L-histidyl-tRNA(His) + AMP + diphosphate + H(+). The chain is Histidine--tRNA ligase from Helicobacter hepaticus (strain ATCC 51449 / 3B1).